We begin with the raw amino-acid sequence, 202 residues long: dTTP/UTP pyrophosphatase (202 aa).

The Proton acceptor role is filled by D76.

This sequence belongs to the Maf family. YhdE subfamily. A divalent metal cation serves as cofactor.

The protein resides in the cytoplasm. The enzyme catalyses dTTP + H2O = dTMP + diphosphate + H(+). It carries out the reaction UTP + H2O = UMP + diphosphate + H(+). In terms of biological role, nucleoside triphosphate pyrophosphatase that hydrolyzes dTTP and UTP. May have a dual role in cell division arrest and in preventing the incorporation of modified nucleotides into cellular nucleic acids. This Neisseria meningitidis serogroup B (strain ATCC BAA-335 / MC58) protein is dTTP/UTP pyrophosphatase.